The following is a 33-amino-acid chain: MSDIN-like toxin proprotein 1 (33 aa).

Positions Met-1–Pro-10 are excised as a propeptide. Residues Ile-11–Pro-18 constitute a cross-link (cyclopeptide (Ile-Pro)). Positions Cys-19–Arg-33 are excised as a propeptide.

The protein belongs to the MSDIN fungal toxin family. Processed by the macrocyclase-peptidase enzyme POPB to yield a toxic cyclic octapeptide. POPB first removes 10 residues from the N-terminus. Conformational trapping of the remaining peptide forces the enzyme to release this intermediate rather than proceed to macrocyclization. The enzyme rebinds the remaining peptide in a different conformation and catalyzes macrocyclization of the N-terminal 8 residues.

Functionally, probable toxin that belongs to the MSDIN-like toxin family responsible for a large number of food poisoning cases and deaths. In Amanita fuliginea (East Asian brown death cap), this protein is MSDIN-like toxin proprotein 1.